Here is a 216-residue protein sequence, read N- to C-terminus: Neural cell adhesion molecule L1.2 (216 aa).

A Fibronectin type-III domain is found at 1–64; sequence EFFIHYLRKD…QTAGARVMEV (64 aa). Over 1 to 73 the chain is Extracellular; that stretch reads EFFIHYLRKD…VKSGFVTESW (73 aa). 2 N-linked (GlcNAc...) asparagine glycosylation sites follow: asparagine 22 and asparagine 46. Residues 74–94 form a helical membrane-spanning segment; that stretch reads FIGLISALVLLLLVLLILCFI. Residues 95 to 216 are Cytoplasmic-facing; the sequence is KRSKGGKYSV…GLPNSAALLD (122 aa). Disordered stretches follow at residues 127–149 and 173–216; these read YRSL…CEDS and DESL…ALLD. Over residues 128 to 139 the composition is skewed to basic and acidic residues; the sequence is RSLESDNEEKRT.

The protein belongs to the immunoglobulin superfamily. L1/neurofascin/NgCAM family. In terms of tissue distribution, expressed in many postmitotic neurons in 16-36 hours embryos. Little or no expression in the olfactory placode, the anterior lateral line/acoustic ganglia complex, the posterior lateral line ganglion, late-developing hindbrain neurons and some Rohon-Beard cells in the spinal cord.

Its subcellular location is the cell membrane. The protein resides in the cell projection. It is found in the growth cone. Its function is as follows. Cell adhesion molecule with an important role in the development of the nervous system. Involved in neuron-neuron adhesion, neurite fasciculation, outgrowth of neurites, etc. Binds to axonin on neurons. The chain is Neural cell adhesion molecule L1.2 (nadl1.2) from Danio rerio (Zebrafish).